Here is a 308-residue protein sequence, read N- to C-terminus: Thymidylate synthase (308 aa).

DUMP contacts are provided by residues arginine 26 and 170–171 (RR). The Nucleophile role is filled by cysteine 190. DUMP-binding positions include 210-213 (RSCD), asparagine 221, and 251-253 (HVY). Aspartate 213 serves as a coordination point for (6R)-5,10-methylene-5,6,7,8-tetrahydrofolate. Alanine 307 is a binding site for (6R)-5,10-methylene-5,6,7,8-tetrahydrofolate.

This sequence belongs to the thymidylate synthase family. Bacterial-type ThyA subfamily. As to quaternary structure, homodimer.

The protein localises to the cytoplasm. It catalyses the reaction dUMP + (6R)-5,10-methylene-5,6,7,8-tetrahydrofolate = 7,8-dihydrofolate + dTMP. The protein operates within pyrimidine metabolism; dTTP biosynthesis. Its function is as follows. Catalyzes the reductive methylation of 2'-deoxyuridine-5'-monophosphate (dUMP) to 2'-deoxythymidine-5'-monophosphate (dTMP) while utilizing 5,10-methylenetetrahydrofolate (mTHF) as the methyl donor and reductant in the reaction, yielding dihydrofolate (DHF) as a by-product. This enzymatic reaction provides an intracellular de novo source of dTMP, an essential precursor for DNA biosynthesis. This chain is Thymidylate synthase, found in Rhizorhabdus wittichii (strain DSM 6014 / CCUG 31198 / JCM 15750 / NBRC 105917 / EY 4224 / RW1) (Sphingomonas wittichii).